Consider the following 184-residue polypeptide: Gastrokine-2 (184 aa).

Residues methionine 1–alanine 20 form the signal peptide. A BRICHOS domain is found at histidine 54–glycine 151. A disulfide bridge links cysteine 81 with cysteine 143.

Heterodimer with TFF1; disulfide linked. Interacts with TFF2. In terms of tissue distribution, stomach foveolar epithelium and duodenal Brunner's glands.

Its subcellular location is the secreted. It is found in the golgi apparatus. The sequence is that of Gastrokine-2 (Gkn2) from Mus musculus (Mouse).